A 170-amino-acid polypeptide reads, in one-letter code: Acetyl-CoA decarbonylase/synthase complex subunit epsilon 1 (170 aa).

It belongs to the CdhB family. In terms of assembly, heterotetramer of two alpha and two epsilon subunits. The ACDS complex is made up of alpha, epsilon, beta, gamma and delta subunits with a probable stoichiometry of (alpha(2)epsilon(2))(4)-beta(8)-(gamma(1)delta(1))(8).

Its pathway is one-carbon metabolism; methanogenesis from acetate. In terms of biological role, part of a complex that catalyzes the reversible cleavage of acetyl-CoA, allowing growth on acetate as sole source of carbon and energy. The alpha-epsilon subcomponent functions as a carbon monoxide dehydrogenase. The precise role of the epsilon subunit is unclear; it may have a stabilizing role within the alpha(2)epsilon(2) component and/or be involved in electron transfer to FAD during a potential FAD-mediated CO oxidation. The protein is Acetyl-CoA decarbonylase/synthase complex subunit epsilon 1 (cdhB1) of Methanosarcina acetivorans (strain ATCC 35395 / DSM 2834 / JCM 12185 / C2A).